A 318-amino-acid polypeptide reads, in one-letter code: Methionyl-tRNA formyltransferase (318 aa).

Residue 115–118 (SLLP) coordinates (6S)-5,6,7,8-tetrahydrofolate.

Belongs to the Fmt family.

It catalyses the reaction L-methionyl-tRNA(fMet) + (6R)-10-formyltetrahydrofolate = N-formyl-L-methionyl-tRNA(fMet) + (6S)-5,6,7,8-tetrahydrofolate + H(+). In terms of biological role, attaches a formyl group to the free amino group of methionyl-tRNA(fMet). The formyl group appears to play a dual role in the initiator identity of N-formylmethionyl-tRNA by promoting its recognition by IF2 and preventing the misappropriation of this tRNA by the elongation apparatus. This Deinococcus radiodurans (strain ATCC 13939 / DSM 20539 / JCM 16871 / CCUG 27074 / LMG 4051 / NBRC 15346 / NCIMB 9279 / VKM B-1422 / R1) protein is Methionyl-tRNA formyltransferase.